A 611-amino-acid polypeptide reads, in one-letter code: Alpha-1,2-mannosyltransferase ALG9 (611 aa).

Over residues 1 to 10 the composition is skewed to basic residues; the sequence is MASRRARQRL. Residues 1–51 form a disordered region; sequence MASRRARQRLKGGGGGGGGGGDAGPAAEKLEQLGSREAGAEPRPESGNKAG. Residues 1–135 are Lumenal-facing; it reads MASRRARQRL…FHARILQTNK (135 aa). Residues 11 to 23 are compositionally biased toward gly residues; it reads KGGGGGGGGGGDA. The N-linked (GlcNAc...) asparagine glycan is linked to asparagine 77. A helical transmembrane segment spans residues 136–156; that stretch reads ILVFYFLRCLLAFVSCVCELY. The Cytoplasmic segment spans residues 157 to 171; it reads FYKAVCKKFGLHVSR. Residues 172–192 traverse the membrane as a helical segment; the sequence is MMLAFLVLSTGMFCSSSAFLP. Residues 193 to 213 lie on the Lumenal side of the membrane; sequence SSFCMYTTLIAMTGWYMDKTP. Residues 214-234 form a helical membrane-spanning segment; it reads IAVLGVAAGAILGWPFSAALG. Residues 235–249 lie on the Cytoplasmic side of the membrane; the sequence is LPIAFDLLARKHRWK. Residues 250 to 270 form a helical membrane-spanning segment; that stretch reads SFLLWSLVALALFLVPVVVID. Residues 271–310 are Lumenal-facing; it reads SYYYGKLVVAPLNIVLYNVFTSHGPDLYGTEPWYFYLING. A helical membrane pass occupies residues 311-331; sequence FLNFNVAFALALLVLPLTFLM. At 332 to 342 the chain is on the cytoplasmic side; it reads EYLLQRFHVQN. A helical membrane pass occupies residues 343–363; that stretch reads LGHPYWLTLAPMYIWFIIFFI. At 364–370 the chain is on the lumenal side; that stretch reads QPHKEER. A helical membrane pass occupies residues 371–391; that stretch reads FLFPVYPLICLCGAVALSALQ. The Cytoplasmic portion of the chain corresponds to 392-405; that stretch reads KCYHFVFQRYRLEH. The helical transmembrane segment at 406 to 426 threads the bilayer; sequence YTVTSNWLALGTVFLFGLLSF. The Lumenal portion of the chain corresponds to 427 to 611; that stretch reads SRSVALFRGY…AKPSRKKSGG (185 aa). Asparagine 550 and asparagine 593 each carry an N-linked (GlcNAc...) asparagine glycan.

This sequence belongs to the glycosyltransferase 22 family.

The protein resides in the endoplasmic reticulum membrane. It carries out the reaction an alpha-D-Man-(1-&gt;2)-alpha-D-Man-(1-&gt;2)-alpha-D-Man-(1-&gt;3)-[alpha-D-Man-(1-&gt;3)-alpha-D-Man-(1-&gt;6)]-beta-D-Man-(1-&gt;4)-beta-D-GlcNAc-(1-&gt;4)-alpha-D-GlcNAc-diphospho-di-trans,poly-cis-dolichol + a di-trans,poly-cis-dolichyl beta-D-mannosyl phosphate = an alpha-D-Man-(1-&gt;2)-alpha-D-Man-(1-&gt;2)-alpha-D-Man-(1-&gt;3)-[alpha-D-Man-(1-&gt;2)-alpha-D-Man-(1-&gt;3)-alpha-D-Man-(1-&gt;6)]-beta-D-Man-(1-&gt;4)-beta-D-GlcNAc-(1-&gt;4)-alpha-D-GlcNAc-diphospho-di-trans,poly-cis-dolichol + a di-trans,poly-cis-dolichyl phosphate + H(+). The catalysed reaction is an alpha-D-Man-(1-&gt;2)-alpha-D-Man-(1-&gt;2)-alpha-D-Man-(1-&gt;3)-[alpha-D-Man-(1-&gt;2)-alpha-D-Man-(1-&gt;3)-[alpha-D-Man-(1-&gt;6)]-alpha-D-Man-(1-&gt;6)]-beta-D-Man-(1-&gt;4)-beta-D-GlcNAc-(1-&gt;4)-alpha-D-GlcNAc-diphospho-di-trans,poly-cis-dolichol + a di-trans,poly-cis-dolichyl beta-D-mannosyl phosphate = an alpha-D-Man-(1-&gt;2)-alpha-D-Man-(1-&gt;2)-alpha-D-Man-(1-&gt;3)-[alpha-D-Man-(1-&gt;2)-alpha-D-Man-(1-&gt;3)-[alpha-D-Man-(1-&gt;2)-alpha-D-Man-(1-&gt;6)]-alpha-D-Man-(1-&gt;6)]-beta-D-Man-(1-&gt;4)-beta-D-GlcNAc-(1-&gt;4)-alpha-D-GlcNAc-diphospho-di-trans,poly-cis-dolichol + a di-trans,poly-cis-dolichyl phosphate + H(+). The protein operates within protein modification; protein glycosylation. Mannosyltransferase that operates in the biosynthetic pathway of dolichol-linked oligosaccharides, the glycan precursors employed in protein asparagine (N)-glycosylation. The assembly of dolichol-linked oligosaccharides begins on the cytosolic side of the endoplasmic reticulum membrane and finishes in its lumen. The sequential addition of sugars to dolichol pyrophosphate produces dolichol-linked oligosaccharides containing fourteen sugars, including two GlcNAcs, nine mannoses and three glucoses. Once assembled, the oligosaccharide is transferred from the lipid to nascent proteins by oligosaccharyltransferases. In the lumen of the endoplasmic reticulum, catalyzes the addition of the seventh and ninth alpha-1,2-linked mannose residues to Man(6)GlcNAc(2)-PP-dolichol and Man(8)GlcNAc(2)-PP-dolichol respectively. In Mus musculus (Mouse), this protein is Alpha-1,2-mannosyltransferase ALG9.